The primary structure comprises 213 residues: Thiamine import ATP-binding protein ThiQ (213 aa).

The ABC transporter domain occupies 1 to 212 (MIELNVTFDY…EQGRIVADQL (212 aa)). 31–38 (GESGAGKS) provides a ligand contact to ATP.

Belongs to the ABC transporter superfamily. Thiamine importer (TC 3.A.1.19.1) family. As to quaternary structure, the complex is composed of two ATP-binding proteins (ThiQ), two transmembrane proteins (ThiP) and a solute-binding protein (ThiB).

It is found in the cell inner membrane. The enzyme catalyses thiamine(out) + ATP + H2O = thiamine(in) + ADP + phosphate + H(+). Part of the ABC transporter complex ThiBPQ involved in thiamine import. Responsible for energy coupling to the transport system. The chain is Thiamine import ATP-binding protein ThiQ from Haemophilus ducreyi (strain 35000HP / ATCC 700724).